Here is a 270-residue protein sequence, read N- to C-terminus: MTSRRRTDHLERTASVHRQMELFSARVCDIISESDTVKRLRLEVAHPDFSFRAGQWVDFFIPGVDTVGGFSICSSPGLLKREGAIELAVKYARHPPAHWIHTECSVDSQVAVRVGGNFYFDPQPSNPVVDLLLVAGGVGINPLYSILLHAADLHRHTHSHRYTPGHTHLCYSAKNTTELLFKDTIIDICHERPDKFSCHFHVTQQSSDIEPQLQPYTIRGRISAEELQRYVDPERTLCYLCGPPPMIEKVSSDLQSTGLPEDRILFEKWW.

The region spanning 20 to 123 (MELFSARVCD…VGGNFYFDPQ (104 aa)) is the FAD-binding FR-type domain. 137-142 (GVGINP) contacts NAD(+).

In Danio rerio (Zebrafish), this protein is Oxidoreductase NAD-binding domain-containing protein 1 (oxnad1).